The primary structure comprises 152 residues: Globin-1 subunit beta (152 aa).

Serine 2 is modified (N-acetylserine). The Globin domain maps to 12–152 (VSNADQKDLL…SLVAVVQAAL (141 aa)). Heme b contacts are provided by histidine 72 and histidine 104.

The protein belongs to the globin family. As to quaternary structure, heterotetramer of two alpha chains and two beta chains.

The protein is Globin-1 subunit beta of Anadara trapezia (Sydney cockle).